Here is a 448-residue protein sequence, read N- to C-terminus: Signal recognition particle protein (448 aa).

Residues 101–108 (GLQGSGKT), 182–186 (DSAGR), and 240–243 (SKFD) contribute to the GTP site.

The protein belongs to the GTP-binding SRP family. SRP54 subfamily. As to quaternary structure, part of the signal recognition particle protein translocation system, which is composed of SRP and FtsY. SRP is a ribonucleoprotein composed of Ffh and a 4.5S RNA molecule.

It localises to the cytoplasm. It catalyses the reaction GTP + H2O = GDP + phosphate + H(+). Its function is as follows. Involved in targeting and insertion of nascent membrane proteins into the cytoplasmic membrane. Binds to the hydrophobic signal sequence of the ribosome-nascent chain (RNC) as it emerges from the ribosomes. The SRP-RNC complex is then targeted to the cytoplasmic membrane where it interacts with the SRP receptor FtsY. Interaction with FtsY leads to the transfer of the RNC complex to the Sec translocase for insertion into the membrane, the hydrolysis of GTP by both Ffh and FtsY, and the dissociation of the SRP-FtsY complex into the individual components. This is Signal recognition particle protein from Helicobacter pylori (strain J99 / ATCC 700824) (Campylobacter pylori J99).